A 458-amino-acid polypeptide reads, in one-letter code: Argininosuccinate lyase (458 aa).

Belongs to the lyase 1 family. Argininosuccinate lyase subfamily.

The protein resides in the cytoplasm. It carries out the reaction 2-(N(omega)-L-arginino)succinate = fumarate + L-arginine. It functions in the pathway amino-acid biosynthesis; L-arginine biosynthesis; L-arginine from L-ornithine and carbamoyl phosphate: step 3/3. This is Argininosuccinate lyase from Acetivibrio thermocellus (strain ATCC 27405 / DSM 1237 / JCM 9322 / NBRC 103400 / NCIMB 10682 / NRRL B-4536 / VPI 7372) (Clostridium thermocellum).